Consider the following 108-residue polypeptide: MALFGSSAPAAAAPANSAEDVQQTKANLIAQLQQEMAMANAKKLISKVNQNCFENCITAPGSSLSASESTCLSSCMEKYIQFWNAASKAYIARATTQTVAANAMATEL.

Positions 52–75 (CFENCITAPGSSLSASESTCLSSC) match the Twin CX3C motif motif. Cystine bridges form between cysteine 52–cysteine 75 and cysteine 56–cysteine 71.

The protein belongs to the small Tim family. In terms of assembly, heterohexamer; composed of 3 copies of TIM8 and 3 copies of TIM13, named soluble 70 kDa complex. Associates with the TIM22 complex, whose core is composed of TIM22 and TIM54. Interacts with the transmembrane regions of multi-pass transmembrane proteins in transit.

The protein localises to the mitochondrion inner membrane. Functionally, mitochondrial intermembrane chaperone that participates in the import and insertion of some multi-pass transmembrane proteins into the mitochondrial inner membrane. Also required for the transfer of beta-barrel precursors from the TOM complex to the sorting and assembly machinery (SAM complex) of the outer membrane. Acts as a chaperone-like protein that protects the hydrophobic precursors from aggregation and guide them through the mitochondrial intermembrane space. The TIM8-TIM13 complex is non essential and only mediates the import of few proteins, while the predominant TIM9-TIM10 70 kDa complex is crucial and mediates the import of much more proteins. In Emericella nidulans (strain FGSC A4 / ATCC 38163 / CBS 112.46 / NRRL 194 / M139) (Aspergillus nidulans), this protein is Mitochondrial import inner membrane translocase subunit tim13 (tim13).